The chain runs to 560 residues: Diphtheria toxin homolog CRM228 (560 aa).

A signal peptide spans M1–A25. NAD(+)-binding residues include H46 and Y90. E173 is a catalytic residue. Disulfide bonds link C211–C226 and C486–C496.

This chain is Diphtheria toxin homolog CRM228, found in Corynebacterium diphtheriae.